We begin with the raw amino-acid sequence, 234 residues long: Large ribosomal subunit protein uL1 (234 aa).

Belongs to the universal ribosomal protein uL1 family. In terms of assembly, part of the 50S ribosomal subunit.

Binds directly to 23S rRNA. The L1 stalk is quite mobile in the ribosome, and is involved in E site tRNA release. Functionally, protein L1 is also a translational repressor protein, it controls the translation of the L11 operon by binding to its mRNA. The polypeptide is Large ribosomal subunit protein uL1 (Pectobacterium carotovorum subsp. carotovorum (strain PC1)).